The sequence spans 724 residues: Catalase-peroxidase (724 aa).

The segment at residues 96 to 225 (WHAAGTYRVA…LAAVMMGLIY (130 aa)) is a cross-link (tryptophyl-tyrosyl-methioninium (Trp-Tyr) (with M-251)). Histidine 97 functions as the Proton acceptor in the catalytic mechanism. A cross-link (tryptophyl-tyrosyl-methioninium (Tyr-Met) (with W-96)) is located at residues 225–251 (YVNPEGVDGNPDPLRTAEDVRITFERM). Residue histidine 266 coordinates heme b.

The protein belongs to the peroxidase family. Peroxidase/catalase subfamily. Homodimer or homotetramer. Requires heme b as cofactor. Post-translationally, formation of the three residue Trp-Tyr-Met cross-link is important for the catalase, but not the peroxidase activity of the enzyme.

The enzyme catalyses H2O2 + AH2 = A + 2 H2O. It catalyses the reaction 2 H2O2 = O2 + 2 H2O. In terms of biological role, bifunctional enzyme with both catalase and broad-spectrum peroxidase activity. In Halorhodospira halophila (strain DSM 244 / SL1) (Ectothiorhodospira halophila (strain DSM 244 / SL1)), this protein is Catalase-peroxidase.